Reading from the N-terminus, the 144-residue chain is ATP synthase subunit 9, mitochondrial (144 aa).

Residues 1–63 (MASTRVLASR…ATRQITQKRA (63 aa)) constitute a mitochondrion transit peptide. 2 helical membrane-spanning segments follow: residues 83-103 (TAAI…AALL) and 120-140 (AILG…VALM).

This sequence belongs to the ATPase C chain family. In terms of assembly, F-type ATPases have 2 components, CF(1) - the catalytic core - and CF(0) - the membrane proton channel. CF(1) has five subunits: alpha(3), beta(3), gamma(1), delta(1), epsilon(1). CF(0) has three main subunits: a, b and c.

The protein localises to the mitochondrion membrane. Its function is as follows. Mitochondrial membrane ATP synthase (F(1)F(0) ATP synthase or Complex V) produces ATP from ADP in the presence of a proton gradient across the membrane which is generated by electron transport complexes of the respiratory chain. F-type ATPases consist of two structural domains, F(1) - containing the extramembraneous catalytic core and F(0) - containing the membrane proton channel, linked together by a central stalk and a peripheral stalk. During catalysis, ATP synthesis in the catalytic domain of F(1) is coupled via a rotary mechanism of the central stalk subunits to proton translocation. Part of the complex F(0) domain. A homomeric c-ring of probably 10 subunits is part of the complex rotary element. The sequence is that of ATP synthase subunit 9, mitochondrial (ATP9) from Podospora anserina (Pleurage anserina).